The following is a 119-amino-acid chain: MSLDQYLPIFLFILVGIGVGVAPQVLGYILGPNLPDSAKNSPYECGFEAFGDARMKFDVRYYLVAILFILFDLEIAFLFPWAVALKDIGALGFWSVMVFLTILVVGFIYEWKKGALDWE.

3 consecutive transmembrane segments (helical) span residues 9 to 29, 63 to 83, and 88 to 108; these read IFLF…LGYI, LVAI…PWAV, and IGAL…VGFI.

It belongs to the complex I subunit 3 family. NDH-1 is composed of 14 different subunits. Subunits NuoA, H, J, K, L, M, N constitute the membrane sector of the complex.

The protein resides in the cell inner membrane. It carries out the reaction a quinone + NADH + 5 H(+)(in) = a quinol + NAD(+) + 4 H(+)(out). In terms of biological role, NDH-1 shuttles electrons from NADH, via FMN and iron-sulfur (Fe-S) centers, to quinones in the respiratory chain. The immediate electron acceptor for the enzyme in this species is believed to be ubiquinone. Couples the redox reaction to proton translocation (for every two electrons transferred, four hydrogen ions are translocated across the cytoplasmic membrane), and thus conserves the redox energy in a proton gradient. The chain is NADH-quinone oxidoreductase subunit A from Albidiferax ferrireducens (strain ATCC BAA-621 / DSM 15236 / T118) (Rhodoferax ferrireducens).